We begin with the raw amino-acid sequence, 90 residues long: Evasin P1126 (90 aa).

Positions 1–25 (MTSHSAVRIAIFAVIALHSIFECLS) are cleaved as a signal peptide. Intrachain disulfides connect cysteine 46/cysteine 62, cysteine 50/cysteine 64, and cysteine 58/cysteine 75. Asparagine 55 is a glycosylation site (N-linked (GlcNAc...) asparagine). An N-linked (GlcNAc...) asparagine glycan is attached at asparagine 77.

It is found in the secreted. In terms of biological role, salivary chemokine-binding protein which binds to host chemokines CXCL1, CXCL2, CXCL3, CXCL4, CXCL5, CXCL6, CXCL7, CXCL10 and CXCL11. This Amblyomma cajennense (Cayenne tick) protein is Evasin P1126.